We begin with the raw amino-acid sequence, 237 residues long: Sugar fermentation stimulation protein homolog (237 aa).

The protein belongs to the SfsA family.

The protein is Sugar fermentation stimulation protein homolog of Colwellia psychrerythraea (strain 34H / ATCC BAA-681) (Vibrio psychroerythus).